The chain runs to 376 residues: MASFVDEVLIRVSSGRGGNGCVAFRREKYVPRGGPAGGDGGRGGDVVFQVRRNMRTLVHLRYGRVFRAKNGQDGEGARRFGAKGHDCVIPLPPGCLLRDAQTHEVLHDFGHAHEGCVTLLSGGRGGWGNYHFRGPVQQAPQRAHSGQPGQERVVHVELRIVADVGFVGLPNAGKSSLLNFFTHARSRVAPYPFTTRIPYLGVLRTGDGRDVILADVPGILERASQGVGLGLRFLKHLTRCAGLAFLIDLADERALHTYDLLCKELYAFSPVFETKARVLVGTKLDLPNARECLQQLRAQHPSTEVCGVSVHNRWGLDELQEAFVRLSDAGAGALRSPVWRNQAPSFMYAQLEDPVCQVRDDFGATVSLSRKRKVRG.

An Obg domain is found at 2-161 (ASFVDEVLIR…RVVHVELRIV (160 aa)). Residues 162–328 (ADVGFVGLPN…LQEAFVRLSD (167 aa)) form the OBG-type G domain. GTP is bound by residues 168 to 175 (GLPNAGKS), 193 to 197 (FTTRI), 215 to 218 (DVPG), 282 to 285 (TKLD), and 309 to 311 (SVH). Mg(2+)-binding residues include Ser-175 and Thr-195.

It belongs to the TRAFAC class OBG-HflX-like GTPase superfamily. OBG GTPase family. Monomer. The cofactor is Mg(2+).

It is found in the cytoplasm. An essential GTPase which binds GTP, GDP and possibly (p)ppGpp with moderate affinity, with high nucleotide exchange rates and a fairly low GTP hydrolysis rate. Plays a role in control of the cell cycle, stress response, ribosome biogenesis and in those bacteria that undergo differentiation, in morphogenesis control. The protein is GTPase Obg of Treponema pallidum (strain Nichols).